Consider the following 1088-residue polypeptide: MQTTDLGNKESGKIWHRKPNPSTNEGIIVNIVHVDASHPSKSARFLHAGFDSAGDSFIAGDHLGNVYLFNLNRNRFDLVQKTMQACTAIAFNLHRRTEFLVALADNSVKCFDTGAKELVSWMRGHESAVTSISVHPSGRYAVTTSSDTAQLWDLDTFQRKRKLNVRQSVGIQKVFFLPLSNTILSCFKDDSIFAWESDTLACKYQLPIPEDGTKLRYKAFAITRDGRMLAAGGKSNNLHLWCLDSKQLFRIIQMPTKVRSVQQLEFLPENFDGGSSQILGVLSQDGIMRFINIQTCKLVFDIGSHDNGIVTSSVSPNGRYITSVMENGSLNIYSVQALSKELNKPPPPLVKMVDLSKDKDSTGNKSGVSGASQEKVRVSSGRTCRPWKSKDQIVRTKYLRPEDTTTSEDKENTLPAGLSKQRLQALLKGFGEYPAKYRMFIWRSLLQLPENHAAFSSLLDKGTHTQYKLLHQEYPIKSRKLLRVLQRTLSALAHWSAIFGETKYLPLLAFPFVKLFQNNQLICFEVVATVITNWCQHWFEYFPNPPINILGMVENLLAHHDKELLQHFINYGVTSQVYAWPLLETLFSEVLTREEWLRLFDNVFSNHPSFLLMAVVSYIISSRSPLLHCNQKDDFEYFFHHRNNLDIGNMIREAYHLMDTSPAEIHPRRLLSDFEPLTRGQYPIFNKYPKFIVDYQGQERERIRQEEIEYLRERQLTHKVEAEAVKRRLEDEAWYQQQELLKGAEEQRRKLLMDEEQKLLHQRQRLATVKRELRLKELQLLDAARRRFLRYQQDQRKMELRRLDDELERKMSLRERETATIAKDVEIRQMELEAQRRFFEQQLAKEQEAVTQEVKGEMDANRRRADLEEQMFWRLMETEEDLKDKKLLEESLAKAERLCVETDWKIQTLQKQKCDDQERGKRYVEVSKMTDDVREKERELCDVLKAMETRKWAEVSEKMTQLETEELASSALRAKRNQFLQERLRQEAEPVNISEDGNEYFERLRDLSRNSTQNDFSSSAERHVAENVCLNDVSASDSSTHFSLDRGRGELENRERALISEVRELRQKLATQARRKYPQLHFSETNWT.

The interval 1-20 (MQTTDLGNKESGKIWHRKPN) is disordered. WD repeat units follow at residues 33 to 74 (HVDA…LNRN), 75 to 116 (RFDL…TGAK), 117 to 157 (ELVS…LDTF), 158 to 200 (QRKR…SDTL), 201 to 248 (ACKY…SKQL), 249 to 296 (FRII…IQTC), and 297 to 334 (KLVFDIGSHDNGIVTSSVSPNGRYITSVMENGSLNIYS). Positions 356-381 (SKDKDSTGNKSGVSGASQEKVRVSSG) are disordered. Over residues 363 to 372 (GNKSGVSGAS) the composition is skewed to polar residues. The Rab-GAP TBC domain occupies 432–607 (EYPAKYRMFI…RLFDNVFSNH (176 aa)). Coiled coils occupy residues 736–903 (QQQE…VETD) and 1048–1076 (RGELENRERALISEVRELRQKLATQARRK).

Its subcellular location is the cytoplasm. The protein resides in the cytoskeleton. It is found in the microtubule organizing center. It localises to the centrosome. The protein localises to the centriolar satellite. Its subcellular location is the cilium basal body. In terms of biological role, molecular adapter which is involved in cilium biogenesis. Part of a functional complex including OFD1 a centriolar protein involved in cilium assembly. Could regulate the cAMP-dependent phosphorylation of OFD1, and its subsequent ubiquitination by PJA2 which ultimately leads to its proteasomal degradation. This is TBC1 domain family member 31 from Xenopus tropicalis (Western clawed frog).